A 309-amino-acid chain; its full sequence is General transcription factor IIH subunit 3 (309 aa).

The C4-type zinc finger occupies 269-286 (CSVCLSIFCNFSPICTTC).

Belongs to the TFB4 family. In terms of assembly, part of a TFIID-containing RNA polymerase II pre-initiation complex that is composed of TBP and at least GTF2A1, GTF2A2, GTF2E1, GTF2E2, GTF2F1, GTF2H2, GTF2H3, GTF2H4, GTF2H5, GTF2B, TCEA1, ERCC2, ERCC3, TAF1, TAF2, TAF3, TAF4, TAF5, TAF6, TAF7, TAF8, TAF9, TAF10, TAF11, TAF12 and TAF13. Component of the 7-subunit TFIIH core complex composed of XPB/ERCC3, XPD/ERCC2, GTF2H1, GTF2H2, GTF2H3, GTF2H4 and GTF2H5, which is active in NER. The core complex associates with the 3-subunit CDK-activating kinase (CAK) module composed of CCNH/cyclin H, CDK7 and MNAT1 to form the 10-subunit holoenzyme (holo-TFIIH) active in transcription. Interacts with RARA; the interaction requires prior phosphorylation of RARA on 'Ser-369' which then enhances interaction of RARA with CDK7.

It localises to the nucleus. Component of the general transcription and DNA repair factor IIH (TFIIH) core complex, which is involved in general and transcription-coupled nucleotide excision repair (NER) of damaged DNA and, when complexed to CAK, in RNA transcription by RNA polymerase II. In NER, TFIIH acts by opening DNA around the lesion to allow the excision of the damaged oligonucleotide and its replacement by a new DNA fragment. In transcription, TFIIH has an essential role in transcription initiation. When the pre-initiation complex (PIC) has been established, TFIIH is required for promoter opening and promoter escape. Phosphorylation of the C-terminal tail (CTD) of the largest subunit of RNA polymerase II by the kinase module CAK controls the initiation of transcription. This chain is General transcription factor IIH subunit 3 (Gtf2h3), found in Mus musculus (Mouse).